The chain runs to 349 residues: Holliday junction branch migration complex subunit RuvB (349 aa).

The segment at 1–181 is large ATPase domain (RuvB-L); that stretch reads MDDRILTSVN…FGVLCPMEFY (181 aa). Residues Leu-20, Arg-21, Gly-62, Lys-65, Thr-66, Thr-67, 128 to 130, Arg-171, Tyr-181, and Arg-218 contribute to the ATP site; that span reads EDY. Mg(2+) is bound at residue Thr-66. The tract at residues 182–252 is small ATPAse domain (RuvB-S); the sequence is NDEELKEIIV…SAKKALNLLE (71 aa). The head domain (RuvB-H) stretch occupies residues 255-349; the sequence is DEGFDSIDNK…DQCSFFKKEK (95 aa). DNA is bound by residues Arg-310 and Arg-315.

This sequence belongs to the RuvB family. As to quaternary structure, homohexamer. Forms an RuvA(8)-RuvB(12)-Holliday junction (HJ) complex. HJ DNA is sandwiched between 2 RuvA tetramers; dsDNA enters through RuvA and exits via RuvB. An RuvB hexamer assembles on each DNA strand where it exits the tetramer. Each RuvB hexamer is contacted by two RuvA subunits (via domain III) on 2 adjacent RuvB subunits; this complex drives branch migration. In the full resolvosome a probable DNA-RuvA(4)-RuvB(12)-RuvC(2) complex forms which resolves the HJ.

Its subcellular location is the cytoplasm. The enzyme catalyses ATP + H2O = ADP + phosphate + H(+). The RuvA-RuvB-RuvC complex processes Holliday junction (HJ) DNA during genetic recombination and DNA repair, while the RuvA-RuvB complex plays an important role in the rescue of blocked DNA replication forks via replication fork reversal (RFR). RuvA specifically binds to HJ cruciform DNA, conferring on it an open structure. The RuvB hexamer acts as an ATP-dependent pump, pulling dsDNA into and through the RuvAB complex. RuvB forms 2 homohexamers on either side of HJ DNA bound by 1 or 2 RuvA tetramers; 4 subunits per hexamer contact DNA at a time. Coordinated motions by a converter formed by DNA-disengaged RuvB subunits stimulates ATP hydrolysis and nucleotide exchange. Immobilization of the converter enables RuvB to convert the ATP-contained energy into a lever motion, pulling 2 nucleotides of DNA out of the RuvA tetramer per ATP hydrolyzed, thus driving DNA branch migration. The RuvB motors rotate together with the DNA substrate, which together with the progressing nucleotide cycle form the mechanistic basis for DNA recombination by continuous HJ branch migration. Branch migration allows RuvC to scan DNA until it finds its consensus sequence, where it cleaves and resolves cruciform DNA. In Clostridium acetobutylicum (strain ATCC 824 / DSM 792 / JCM 1419 / IAM 19013 / LMG 5710 / NBRC 13948 / NRRL B-527 / VKM B-1787 / 2291 / W), this protein is Holliday junction branch migration complex subunit RuvB.